The chain runs to 55 residues: Protein CADMIUM TOLERANCE 2 (55 aa).

A helical transmembrane segment spans residues 24-40; that stretch reads GCLYACIFTALCCFCCY.

The protein belongs to the CYSTM1 family. As to expression, expressed only in roots.

It is found in the cell membrane. It localises to the secreted. Its subcellular location is the cell wall. In terms of biological role, confers resistance to heavy metal ions (e.g. cadmium (CdCl(2)) and copper (CuCl(2))) by chelating them at the plasma membrane of root cells, thus stopping their entry and reducing their accumulation. The polypeptide is Protein CADMIUM TOLERANCE 2 (Oryza sativa subsp. japonica (Rice)).